Reading from the N-terminus, the 201-residue chain is Recombination protein RecR (201 aa).

A C4-type zinc finger spans residues C59–C74. The 96-residue stretch at S82 to P177 folds into the Toprim domain.

The protein belongs to the RecR family.

Functionally, may play a role in DNA repair. It seems to be involved in an RecBC-independent recombinational process of DNA repair. It may act with RecF and RecO. This Rickettsia peacockii (strain Rustic) protein is Recombination protein RecR.